Reading from the N-terminus, the 281-residue chain is Putrescine transport system permease protein PotI (281 aa).

At 1 to 13 (MNNLPVVRSPWRI) the chain is on the cytoplasmic side. Residues 14–33 (VILLLGFTFLYAPMLMLVIY) form a helical membrane-spanning segment. The Periplasmic portion of the chain corresponds to 34–68 (SFNSSKLVTVWAGWSTRWYGELLRDDAMMSAVGLS). Positions 65 to 260 (VGLSLTIAAC…GAVGIVGFIA (196 aa)) constitute an ABC transmembrane type-1 domain. The helical transmembrane segment at 69–88 (LTIAACAATAAAILGTIAAV) threads the bilayer. Residues 89-115 (VLVRFGRFRGSNGFAFMITAPLVMPDV) lie on the Cytoplasmic side of the membrane. Residues 116 to 135 (ITGLSLLLLFVALAHAIGWP) traverse the membrane as a helical segment. At 136-140 (ADRGM) the chain is on the periplasmic side. A helical transmembrane segment spans residues 141–160 (LTIWLAHVTFCTAYVAVVIS). Residues 161 to 186 (SRLRELDRSIEEAAMDLGATPLKVFF) lie on the Cytoplasmic side of the membrane. Residues 187 to 206 (VITLPMIMPAIISGWLLAFT) form a helical membrane-spanning segment. The Periplasmic segment spans residues 207–243 (LSLDDLVIASFVSGPGATTLPMLVFSSVRMGVNPEIN). The chain crosses the membrane as a helical span at residues 244–263 (ALATLILGAVGIVGFIAWYL). Over 264 to 281 (MARAEKQRIRDIQRARRG) the chain is Cytoplasmic.

Belongs to the binding-protein-dependent transport system permease family. CysTW subfamily. In terms of assembly, the complex is composed of two ATP-binding proteins (PotG), two transmembrane proteins (PotH and PotI) and a solute-binding protein (PotF).

The protein localises to the cell inner membrane. Functionally, part of the ABC transporter complex PotFGHI involved in putrescine uptake. Responsible for the translocation of the substrate across the membrane. The chain is Putrescine transport system permease protein PotI from Escherichia coli O6:H1 (strain CFT073 / ATCC 700928 / UPEC).